Reading from the N-terminus, the 417-residue chain is MLEQMGIAAKQASYKLAQLSSREKNRVLEKIADELEAQSEIILNANAQDVADARANGLGEAMLDRLALTPARLKGIADDVRQVCNLADPVGQVIDGSVLDSGLRLERRRVPLGVIGVIYEARPNVTVDVASLCLKTGNAVILRGGKETCRTNAATVAVIQDALKSCGLPAGAVQAIDNPDRALVSEMLRMDKYIDMLIPRGGAGLHKLCREQSTIPVITGGIGVCHIYVDESVEIAEALKVIVNAKTQRPSTCNTVETLLVNKNIADSFLPALSKQMAESGVTLHADAAALAQLQTGPAKVVAVKAEEYDDEFLSLDLNVKIVSDLDDAIAHIREHGTEHSDAILTRDMRNAQRFVNEVDSSAVYVNASTRFTDGGQFGLGAEVAVSTQKLHARGPMGLEALTTYKWIGIGDYTIRA.

Belongs to the gamma-glutamyl phosphate reductase family.

It localises to the cytoplasm. It catalyses the reaction L-glutamate 5-semialdehyde + phosphate + NADP(+) = L-glutamyl 5-phosphate + NADPH + H(+). It functions in the pathway amino-acid biosynthesis; L-proline biosynthesis; L-glutamate 5-semialdehyde from L-glutamate: step 2/2. Its function is as follows. Catalyzes the NADPH-dependent reduction of L-glutamate 5-phosphate into L-glutamate 5-semialdehyde and phosphate. The product spontaneously undergoes cyclization to form 1-pyrroline-5-carboxylate. The chain is Gamma-glutamyl phosphate reductase from Escherichia coli (strain 55989 / EAEC).